We begin with the raw amino-acid sequence, 265 residues long: Probable U2 small nuclear ribonucleoprotein A' (265 aa).

LRR repeat units follow at residues 20–41 (RERE…GATL), 43–64 (QFDT…PHLP), 65–86 (RLKC…LEEA), and 89–110 (NLGS…EPLV). The 39-residue stretch at 123 to 161 (NPVSTKPNYREYMAYKFPQLRLLDFRKIKQKDRQAAQEF) folds into the LRRCT domain.

This sequence belongs to the U2 small nuclear ribonucleoprotein A family. In terms of assembly, interacts with the SMN complex.

Its subcellular location is the nucleus. Its function is as follows. Involved in pre-mRNA splicing as component of the spliceosome. Associated with sn-RNP U2, where it contributes to the binding of stem loop IV of U2 snRNA. In the germ line, has a role in oogenesis, by regulating spermatogenesis and nurse cell nuclei chromatin decondensation and dispersal, probably by regulating the splicing of proteins necessary for germline differentiation such as the meiotic protein mei-P26. The sequence is that of Probable U2 small nuclear ribonucleoprotein A' (U2A) from Drosophila melanogaster (Fruit fly).